The primary structure comprises 130 residues: Small ribosomal subunit protein uS9 (130 aa).

The disordered stretch occupies residues 101 to 130 (AGLLTRDARMKERKKPGLKKARKASQFSKR). The segment covering 111–130 (KERKKPGLKKARKASQFSKR) has biased composition (basic residues).

It belongs to the universal ribosomal protein uS9 family.

This is Small ribosomal subunit protein uS9 from Levilactobacillus brevis (strain ATCC 367 / BCRC 12310 / CIP 105137 / JCM 1170 / LMG 11437 / NCIMB 947 / NCTC 947) (Lactobacillus brevis).